The following is a 714-amino-acid chain: Polyribonucleotide nucleotidyltransferase (714 aa).

Aspartate 493 and aspartate 499 together coordinate Mg(2+). The KH domain occupies 559-618 (PRIETTKIPADRIGELIGPGGKNIKAIQAESGADINIEEDGTVHIYAAKQEGLDRALELV). In terms of domain architecture, S1 motif spans 628 to 696 (GELYTGKIVS…DKGRVKMSIR (69 aa)).

It belongs to the polyribonucleotide nucleotidyltransferase family. The cofactor is Mg(2+).

It is found in the cytoplasm. It catalyses the reaction RNA(n+1) + phosphate = RNA(n) + a ribonucleoside 5'-diphosphate. In terms of biological role, involved in mRNA degradation. Catalyzes the phosphorolysis of single-stranded polyribonucleotides processively in the 3'- to 5'-direction. In Akkermansia muciniphila (strain ATCC BAA-835 / DSM 22959 / JCM 33894 / BCRC 81048 / CCUG 64013 / CIP 107961 / Muc), this protein is Polyribonucleotide nucleotidyltransferase.